Consider the following 165-residue polypeptide: Crossover junction endodeoxyribonuclease RuvC (165 aa).

Active-site residues include aspartate 7, glutamate 67, and aspartate 140. Mg(2+) contacts are provided by aspartate 7, glutamate 67, and aspartate 140.

It belongs to the RuvC family. As to quaternary structure, homodimer which binds Holliday junction (HJ) DNA. The HJ becomes 2-fold symmetrical on binding to RuvC with unstacked arms; it has a different conformation from HJ DNA in complex with RuvA. In the full resolvosome a probable DNA-RuvA(4)-RuvB(12)-RuvC(2) complex forms which resolves the HJ. Mg(2+) is required as a cofactor.

The protein resides in the cytoplasm. It carries out the reaction Endonucleolytic cleavage at a junction such as a reciprocal single-stranded crossover between two homologous DNA duplexes (Holliday junction).. The RuvA-RuvB-RuvC complex processes Holliday junction (HJ) DNA during genetic recombination and DNA repair. Endonuclease that resolves HJ intermediates. Cleaves cruciform DNA by making single-stranded nicks across the HJ at symmetrical positions within the homologous arms, yielding a 5'-phosphate and a 3'-hydroxyl group; requires a central core of homology in the junction. The consensus cleavage sequence is 5'-(A/T)TT(C/G)-3'. Cleavage occurs on the 3'-side of the TT dinucleotide at the point of strand exchange. HJ branch migration catalyzed by RuvA-RuvB allows RuvC to scan DNA until it finds its consensus sequence, where it cleaves and resolves the cruciform DNA. This Desulfitobacterium hafniense (strain DSM 10664 / DCB-2) protein is Crossover junction endodeoxyribonuclease RuvC.